The sequence spans 406 residues: Tryptophan synthase beta chain (406 aa).

Lys-99 is modified (N6-(pyridoxal phosphate)lysine).

This sequence belongs to the TrpB family. In terms of assembly, tetramer of two alpha and two beta chains. Pyridoxal 5'-phosphate is required as a cofactor.

The enzyme catalyses (1S,2R)-1-C-(indol-3-yl)glycerol 3-phosphate + L-serine = D-glyceraldehyde 3-phosphate + L-tryptophan + H2O. It participates in amino-acid biosynthesis; L-tryptophan biosynthesis; L-tryptophan from chorismate: step 5/5. In terms of biological role, the beta subunit is responsible for the synthesis of L-tryptophan from indole and L-serine. This Sinorhizobium fredii (strain NBRC 101917 / NGR234) protein is Tryptophan synthase beta chain.